The sequence spans 190 residues: MLYLASRSPRRQELLQRLDVPFQTLQLDVPELRAADESPDQYVQRVALEKAHAGLALVQAADPDAIVLGSDTEVVLGERVFGKPVDVDDAVAMLRALSGRTHQVLTAVVLVCAQRAPAQALVVSEVTFDTLDDAQIAAYAACGEPMGKAGAYAIQGRAERFIRHLSGSYSGVMGLPLYHTSQLLTAFGAH.

The active-site Proton acceptor is Asp-71.

Belongs to the Maf family. YhdE subfamily. A divalent metal cation serves as cofactor.

The protein localises to the cytoplasm. It catalyses the reaction dTTP + H2O = dTMP + diphosphate + H(+). The enzyme catalyses UTP + H2O = UMP + diphosphate + H(+). In terms of biological role, nucleoside triphosphate pyrophosphatase that hydrolyzes dTTP and UTP. May have a dual role in cell division arrest and in preventing the incorporation of modified nucleotides into cellular nucleic acids. This is dTTP/UTP pyrophosphatase from Xanthomonas euvesicatoria pv. vesicatoria (strain 85-10) (Xanthomonas campestris pv. vesicatoria).